Here is a 241-residue protein sequence, read N- to C-terminus: Agamous-like MADS-box protein AP1 (241 aa).

Residues 1-61 form the MADS-box domain; it reads MGRGRVQLKR…GKLFEYSTDS (61 aa). The K-box domain occupies 88-178; that stretch reads QGNWSLEYSK…AKEIKEKEKT (91 aa).

In terms of tissue distribution, expressed in tendrils and flowers.

It localises to the nucleus. In terms of biological role, probable transcription factor involved in flower development. The polypeptide is Agamous-like MADS-box protein AP1 (Vitis vinifera (Grape)).